Here is a 109-residue protein sequence, read N- to C-terminus: uncharacterized protein (109 aa).

A run of 2 helical transmembrane segments spans residues 19-39 (LELV…CLIP) and 53-73 (YFID…FYPF).

It is found in the membrane. This is an uncharacterized protein from Saccharomyces cerevisiae (strain ATCC 204508 / S288c) (Baker's yeast).